Here is a 509-residue protein sequence, read N- to C-terminus: BPI fold-containing family C protein (509 aa).

Positions 1 to 23 (MRTKQVPVLWACFLLWSLYIASS) are cleaved as a signal peptide. Residues Asn63, Asn79, Asn92, Asn113, and Asn117 are each glycosylated (N-linked (GlcNAc...) asparagine). The cysteines at positions 161 and 202 are disulfide-linked. Asn215, Asn227, Asn357, Asn374, and Asn457 each carry an N-linked (GlcNAc...) asparagine glycan.

This sequence belongs to the BPI/LBP/Plunc superfamily. BPI/LBP family.

The protein localises to the secreted. The polypeptide is BPI fold-containing family C protein (Bpifc) (Mus musculus (Mouse)).